A 488-amino-acid chain; its full sequence is Protein DETOXIFICATION 35 (488 aa).

Helical transmembrane passes span 38-58 (LWMI…VSSV), 73-93 (AVSI…LGMG), 121-141 (IILF…TPVL), 150-170 (IAVP…SLAF), 187-207 (IAWI…LFII), 218-238 (LAFN…VIGW), 262-282 (IASA…IVLT), 296-316 (SICM…NAAI), 336-356 (VYVT…AIII), 379-401 (AYLL…VAVG), 408-428 (VAYI…YLLG), and 439-459 (WSGM…VLYK).

The protein belongs to the multi antimicrobial extrusion (MATE) (TC 2.A.66.1) family. Highly expressed in inflorescence tissues, especially in floral epidermal guard cells including those of the anthers, stigma, siliques and nectaries. Also detected in the meristematic zone of the root apex and in the elongation zone through to the fully expanded cells of the differentiation zone.

Its subcellular location is the vacuole membrane. In terms of biological role, multidrug and toxin efflux transporter involved in flavonoid metabolism. Required for proper reproductive development. In Arabidopsis thaliana (Mouse-ear cress), this protein is Protein DETOXIFICATION 35.